Reading from the N-terminus, the 251-residue chain is 5'-nucleotidase SurE (251 aa).

4 residues coordinate a divalent metal cation: aspartate 8, aspartate 9, serine 39, and asparagine 95.

This sequence belongs to the SurE nucleotidase family. The cofactor is a divalent metal cation.

It localises to the cytoplasm. It catalyses the reaction a ribonucleoside 5'-phosphate + H2O = a ribonucleoside + phosphate. Its function is as follows. Nucleotidase that shows phosphatase activity on nucleoside 5'-monophosphates. This chain is 5'-nucleotidase SurE, found in Ralstonia nicotianae (strain ATCC BAA-1114 / GMI1000) (Ralstonia solanacearum).